The sequence spans 124 residues: Superoxide reductase (124 aa).

Residues E14, H16, H41, H47, C111, and H114 each contribute to the Fe cation site.

The protein belongs to the desulfoferrodoxin family. In terms of assembly, homotetramer. It depends on Fe cation as a cofactor.

The enzyme catalyses reduced [rubredoxin] + superoxide + 2 H(+) = oxidized [rubredoxin] + H2O2. Functionally, uses electrons from reduced NADP, by way of rubredoxin and an oxidoreductase, to catalyze the reduction of superoxide to hydrogen peroxide. The chain is Superoxide reductase (sorA) from Pyrococcus furiosus (strain ATCC 43587 / DSM 3638 / JCM 8422 / Vc1).